Here is a 212-residue protein sequence, read N- to C-terminus: Adenylate kinase (212 aa).

Glycine 10–threonine 15 provides a ligand contact to ATP. The tract at residues serine 30 to valine 59 is NMP. AMP-binding positions include threonine 31, arginine 36, arginine 57–valine 59, and glutamine 90. The segment at glycine 124 to aspartate 161 is LID. Position 125 (arginine 125) interacts with ATP. Positions 128 and 131 each coordinate Zn(2+). An ATP-binding site is contributed by serine 134 to tyrosine 135. Residues cysteine 148 and aspartate 151 each contribute to the Zn(2+) site. Residues arginine 158 and arginine 169 each contribute to the AMP site. Asparagine 198 provides a ligand contact to ATP.

Belongs to the adenylate kinase family. In terms of assembly, monomer.

It localises to the cytoplasm. It carries out the reaction AMP + ATP = 2 ADP. It participates in purine metabolism; AMP biosynthesis via salvage pathway; AMP from ADP: step 1/1. Its function is as follows. Catalyzes the reversible transfer of the terminal phosphate group between ATP and AMP. Plays an important role in cellular energy homeostasis and in adenine nucleotide metabolism. This Mesoplasma florum (strain ATCC 33453 / NBRC 100688 / NCTC 11704 / L1) (Acholeplasma florum) protein is Adenylate kinase.